The sequence spans 207 residues: Holliday junction branch migration complex subunit RuvA (207 aa).

The tract at residues 1-65 (MYDYIRGILT…ETEHVLYGFS (65 aa)) is domain I. A domain II region spans residues 66 to 144 (SRRERECFRM…DLLPLDSKAI (79 aa)). The tract at residues 145–155 (ASWESVKPSCM) is flexible linker. Positions 155-207 (MDEGIQALAALGYSKPSAERMIAEAMSELPENASLAEILPIALKKNLQGLNKS) are domain III.

This sequence belongs to the RuvA family. In terms of assembly, homotetramer. Forms an RuvA(8)-RuvB(12)-Holliday junction (HJ) complex. HJ DNA is sandwiched between 2 RuvA tetramers; dsDNA enters through RuvA and exits via RuvB. An RuvB hexamer assembles on each DNA strand where it exits the tetramer. Each RuvB hexamer is contacted by two RuvA subunits (via domain III) on 2 adjacent RuvB subunits; this complex drives branch migration. In the full resolvosome a probable DNA-RuvA(4)-RuvB(12)-RuvC(2) complex forms which resolves the HJ.

The protein localises to the cytoplasm. The RuvA-RuvB-RuvC complex processes Holliday junction (HJ) DNA during genetic recombination and DNA repair, while the RuvA-RuvB complex plays an important role in the rescue of blocked DNA replication forks via replication fork reversal (RFR). RuvA specifically binds to HJ cruciform DNA, conferring on it an open structure. The RuvB hexamer acts as an ATP-dependent pump, pulling dsDNA into and through the RuvAB complex. HJ branch migration allows RuvC to scan DNA until it finds its consensus sequence, where it cleaves and resolves the cruciform DNA. The polypeptide is Holliday junction branch migration complex subunit RuvA (Chlamydia caviae (strain ATCC VR-813 / DSM 19441 / 03DC25 / GPIC) (Chlamydophila caviae)).